The following is a 372-amino-acid chain: GTPase Obg (372 aa).

In terms of domain architecture, Obg spans 1–159 (MKFVDEATIE…RRLRLELKVL (159 aa)). In terms of domain architecture, OBG-type G spans 160 to 336 (ADVGLLGLPN…LIWALQDYLD (177 aa)). GTP is bound by residues 166–173 (GLPNAGKS), 191–195 (FTTLH), 213–216 (DIPG), 288–291 (NKLD), and 317–319 (SGL). Mg(2+)-binding residues include serine 173 and threonine 193. Residues 341-372 (KEQITQDKADGSYVHEDPRFDTTRDAPPSGKD) form a disordered region.

It belongs to the TRAFAC class OBG-HflX-like GTPase superfamily. OBG GTPase family. As to quaternary structure, monomer. Requires Mg(2+) as cofactor.

Its subcellular location is the cytoplasm. In terms of biological role, an essential GTPase which binds GTP, GDP and possibly (p)ppGpp with moderate affinity, with high nucleotide exchange rates and a fairly low GTP hydrolysis rate. Plays a role in control of the cell cycle, stress response, ribosome biogenesis and in those bacteria that undergo differentiation, in morphogenesis control. The polypeptide is GTPase Obg (Bordetella avium (strain 197N)).